Reading from the N-terminus, the 109-residue chain is UPF0482 protein ESA_01750 (109 aa).

The N-terminal stretch at 1 to 24 (MNKFLRHSLLLALLTGALSGVANA) is a signal peptide. The span at 38–55 (RTRQDAAMDKEQWNDTRS) shows a compositional bias: basic and acidic residues. The disordered stretch occupies residues 38-63 (RTRQDAAMDKEQWNDTRSLRQKVNKR).

It belongs to the UPF0482 family.

The polypeptide is UPF0482 protein ESA_01750 (Cronobacter sakazakii (strain ATCC BAA-894) (Enterobacter sakazakii)).